We begin with the raw amino-acid sequence, 469 residues long: Trigger factor (469 aa).

The PPIase FKBP-type domain maps to 165 to 250 (GDRVTIDYIG…VKAVCKSDEL (86 aa)). Basic and acidic residues predominate over residues 444–460 (DLTEKKPLKKKTAEKVS). The segment at 444–469 (DLTEKKPLKKKTAEKVSTKKKAPKKS) is disordered.

This sequence belongs to the FKBP-type PPIase family. Tig subfamily.

Its subcellular location is the cytoplasm. It catalyses the reaction [protein]-peptidylproline (omega=180) = [protein]-peptidylproline (omega=0). In terms of biological role, involved in protein export. Acts as a chaperone by maintaining the newly synthesized protein in an open conformation. Functions as a peptidyl-prolyl cis-trans isomerase. In Bartonella henselae (strain ATCC 49882 / DSM 28221 / CCUG 30454 / Houston 1) (Rochalimaea henselae), this protein is Trigger factor.